A 98-amino-acid chain; its full sequence is Integration host factor subunit beta (98 aa).

The protein belongs to the bacterial histone-like protein family. As to quaternary structure, heterodimer of an alpha and a beta chain.

This protein is one of the two subunits of integration host factor, a specific DNA-binding protein that functions in genetic recombination as well as in transcriptional and translational control. This is Integration host factor subunit beta from Pseudomonas putida (strain W619).